We begin with the raw amino-acid sequence, 246 residues long: MNESQPKLKYKRILLKFSGEALMGKSQFGIDPSVLDSLARDIAELIHMGVEVGLVLGGGNLFRGKALSQAGVGRVTGDHMGMLATVMNALALRDALERIDLPARIMSAIPMLGVVDPYHRRKAITHLRNGQVVIFAAGTGNPFFTTDTAACLRAIEIGADIVLKATKVDGVYSADPLKNSDAKRYDYLTYKEVLTKGLEVMDSTAICLCQDQGMPLQVFDMAAPKALKRIVTGERVGTIVGANHDQ.

16–19 provides a ligand contact to ATP; that stretch reads KFSG. Glycine 58 serves as a coordination point for UMP. Glycine 59 and arginine 63 together coordinate ATP. UMP contacts are provided by residues aspartate 78 and 139 to 146; that span reads TGNPFFTT. 3 residues coordinate ATP: threonine 166, tyrosine 172, and aspartate 175.

Belongs to the UMP kinase family. Homohexamer.

Its subcellular location is the cytoplasm. The enzyme catalyses UMP + ATP = UDP + ADP. It functions in the pathway pyrimidine metabolism; CTP biosynthesis via de novo pathway; UDP from UMP (UMPK route): step 1/1. Its activity is regulated as follows. Inhibited by UTP. In terms of biological role, catalyzes the reversible phosphorylation of UMP to UDP. This Legionella pneumophila (strain Corby) protein is Uridylate kinase.